Here is a 299-residue protein sequence, read N- to C-terminus: DNA-binding transcriptional activator HetR (299 aa).

Serine 152 is an active-site residue.

This sequence belongs to the peptidase S48 family. Homodimer; disulfide-linked.

Functionally, might be involved in temporal and/or spatial regulation of nitrogen fixation. Dimerization is required for DNA-binding. Has both a protease and a DNA-binding activity. In Leptolyngbya boryana (Plectonema boryanum), this protein is DNA-binding transcriptional activator HetR.